Consider the following 545-residue polypeptide: MSRYRFRKARSNWPMGQNDSRWEPPPVRLNELVTATEPEEIPLPKLEDQPYEGGPLNMTGFMYHPRTKKYYKMTQDPTMPQGFSKSDLDRMEKAREAKFQANRPRFTSGSFIQRPVFKPITTLMDDLTLGRCTMARVERHIHESRLLNCNPKPSFTIKTPIEHYDVSGCEFLDVSETGDRIVGTFTVNPNGVAAKHSAVYVFEVDSIGDTIQSESSRREAYQLLPIRSRSNNAGFNTLGLTVRPMLRDDGFSDEPSYLDYAVTRYNSFIVDQTLARVDADVTCMLTVTANDTITRNGNVCSYCTVHLEPLAELSDPEAMPTLNSPIYNKSWREKGNIWSVGWNAPQMSIGFGLESCFRVENLLTDRSFLMSSRKRNVLNHCFSADGNLVYMGLRNDNVIKSDLRMNRDHITGQLNGACNTTFVRVLEKTRPECVVTEGFDSIIRIWDFRWPKNPMMEMHGHSNNCNRLNVFFDKEERFVFAAGSDGYVRGWSLTSGDMLCSVKTPNHSNPIFPRAVYSDCWGGRPGNSAIIMAVGDSMRVHSLEL.

The segment covering Met1–Arg10 has biased composition (basic residues). The interval Met1–Pro25 is disordered. 2 WD repeats span residues Ala417–Met456 and Gly460–Ser501.

This is an uncharacterized protein from Caenorhabditis elegans.